Here is a 305-residue protein sequence, read N- to C-terminus: Phosphoribosylaminoimidazole-succinocarboxamide synthase (305 aa).

It belongs to the SAICAR synthetase family.

The catalysed reaction is 5-amino-1-(5-phospho-D-ribosyl)imidazole-4-carboxylate + L-aspartate + ATP = (2S)-2-[5-amino-1-(5-phospho-beta-D-ribosyl)imidazole-4-carboxamido]succinate + ADP + phosphate + 2 H(+). It participates in purine metabolism; IMP biosynthesis via de novo pathway; 5-amino-1-(5-phospho-D-ribosyl)imidazole-4-carboxamide from 5-amino-1-(5-phospho-D-ribosyl)imidazole-4-carboxylate: step 1/2. The protein is Phosphoribosylaminoimidazole-succinocarboxamide synthase of Polaromonas naphthalenivorans (strain CJ2).